Reading from the N-terminus, the 512-residue chain is Protein singed (512 aa).

The protein belongs to the fascin family. In terms of assembly, interacts with Rab35, with stronger binding to the Rab35-GTP form compared to the Rab35-GDP form.

It localises to the cytoplasm. The protein localises to the cytoskeleton. In terms of biological role, acts as an actin bundling protein. May have a role in the asymmetric organization and/or movement of cytoplasmic components. It has a role in somatic cells during the formation of adult bristles and hairs, and in the female germline during oogenesis. This is Protein singed (sn) from Drosophila melanogaster (Fruit fly).